A 313-amino-acid chain; its full sequence is Ribosomal RNA small subunit methyltransferase H (313 aa).

S-adenosyl-L-methionine-binding positions include 35–37, Asp55, Phe80, Asp102, and Gln109; that span reads GGH.

It belongs to the methyltransferase superfamily. RsmH family.

The protein localises to the cytoplasm. It carries out the reaction cytidine(1402) in 16S rRNA + S-adenosyl-L-methionine = N(4)-methylcytidine(1402) in 16S rRNA + S-adenosyl-L-homocysteine + H(+). Functionally, specifically methylates the N4 position of cytidine in position 1402 (C1402) of 16S rRNA. The polypeptide is Ribosomal RNA small subunit methyltransferase H (Shewanella sp. (strain MR-7)).